A 427-amino-acid chain; its full sequence is Vitamin D3 receptor (427 aa).

The segment at residues 21 to 96 (PRICGVCGDR…IGMMKEFILT (76 aa)) is a DNA-binding region (nuclear receptor). Zn(2+) contacts are provided by C24, C27, C41, C44, C60, C66, C76, and C79. NR C4-type zinc fingers lie at residues 24 to 44 (CGVC…CEGC) and 60 to 79 (CPFN…CQAC). Residues 97-126 (DEEVQRKREMILKRKEEEALKDSLRPKLSE) are hinge. The 297-residue stretch at 127-423 (EQQRIIAILL…LTPLVLEVFG (297 aa)) folds into the NR LBD domain. Position 143 (Y143) interacts with calcitriol. Residues 149–201 (DFGQFRPPVRGDEEEGTLPSRSSSAHAPSFSGSSSSSCSDQYTSSPDTMEPAS) form a disordered region. Over residues 168 to 193 (SRSSSAHAPSFSGSSSSSCSDQYTSS) the composition is skewed to low complexity. Position 237 (S237) interacts with calcitriol. The tract at residues 246–264 (KMIPGFRDLTAEDQIVLLK) is interaction with coactivator LXXLL motif. Calcitriol contacts are provided by R274, S278, H305, and H397. Positions 416-424 (PLVLEVFGN) match the 9aaTAD motif.

The protein belongs to the nuclear hormone receptor family. NR1 subfamily. Homodimer in the absence of bound vitamin D3. Heterodimer with RXRA after vitamin D3 binding. Interacts with MED1, NCOA1, NCOA2, NCOA3 and NCOA6 coactivators, leading to a strong increase of transcription of target genes. Interacts with the corepressor NCOR1. Interacts with SNW1. Interacts with IRX4, the interaction does not affect its transactivation activity. Interacts with CRY1. Interacts with CRY2 in a ligand-dependent manner. In terms of processing, ubiquitinated by UBR5, leading to its degradation: UBR5 specifically recognizes and binds ligand-bound VDR when it is not associated with coactivators (NCOAs). In presence of NCOAs, the UBR5-degron is not accessible, preventing its ubiquitination and degradation.

Its subcellular location is the nucleus. The protein localises to the cytoplasm. Nuclear receptor for calcitriol, the active form of vitamin D3 which mediates the action of this vitamin on cells. Enters the nucleus upon vitamin D3 binding where it forms heterodimers with the retinoid X receptor/RXR. The VDR-RXR heterodimers bind to specific response elements on DNA and activate the transcription of vitamin D3-responsive target genes. Plays a central role in calcium homeostasis. Also functions as a receptor for the secondary bile acid lithocholic acid (LCA) and its metabolites. The chain is Vitamin D3 receptor (VDR) from Sus scrofa (Pig).